Here is a 222-residue protein sequence, read N- to C-terminus: Tegument protein UL26 (222 aa).

It belongs to the herpesviridae US22 family. In terms of assembly, interacts with UL25. Interacts with ISGylation machinery components ISG15, UBA7 and HERC5; these interactions inhibit global protein ISGylation. ISGylated; ISGylation regulates UL26 stability and inhibits its activities to suppress NF-kappa-B signaling.

It localises to the virion tegument. It is found in the host nucleus. In terms of biological role, plays a role in the inhibition of host NF-kappa-B. This inhibition affects both the canonical and the non-canonical pathways. Blocks the induction of host IKK phosphorylation. May also influence the normal phosphorylation state of several tegument proteins including pp28 in virions. Also suppresses virus-induced ISGylation independent of its own ISGylation. This Homo sapiens (Human) protein is Tegument protein UL26 (UL26).